Reading from the N-terminus, the 443-residue chain is Adenylyltransferase and sulfurtransferase UBA4 (443 aa).

ATP-binding positions include G83, D104, 111-115, K128, and 172-173; these read SNLHR and DT. Zn(2+) is bound by residues C214 and C217. Residue C231 is the Glycyl thioester intermediate; for adenylyltransferase activity of the active site. Zn(2+)-binding residues include C292 and C295. Positions 343 to 441 constitute a Rhodanese domain; it reads QSKAPVLLDV…WSDIVNPKFP (99 aa). The active-site Cysteine persulfide intermediate; for sulfurtransferase activity is the C400.

This sequence in the N-terminal section; belongs to the HesA/MoeB/ThiF family. UBA4 subfamily. Zn(2+) serves as cofactor.

It is found in the cytoplasm. The protein localises to the cytosol. It participates in tRNA modification; 5-methoxycarbonylmethyl-2-thiouridine-tRNA biosynthesis. Functionally, plays a central role in 2-thiolation of mcm(5)S(2)U at tRNA wobble positions of cytosolic tRNA(Lys), tRNA(Glu) and tRNA(Gln). Acts by mediating the C-terminal thiocarboxylation of sulfur carrier URM1. Its N-terminus first activates URM1 as acyl-adenylate (-COAMP), then the persulfide sulfur on the catalytic cysteine is transferred to URM1 to form thiocarboxylation (-COSH) of its C-terminus. The reaction probably involves hydrogen sulfide that is generated from the persulfide intermediate and that acts as a nucleophile towards URM1. Subsequently, a transient disulfide bond is formed. Does not use thiosulfate as sulfur donor; NFS1 probably acting as a sulfur donor for thiocarboxylation reactions. Prior mcm(5) tRNA modification by the elongator complex is required for 2-thiolation. May also be involved in protein urmylation. The protein is Adenylyltransferase and sulfurtransferase UBA4 of Scheffersomyces stipitis (strain ATCC 58785 / CBS 6054 / NBRC 10063 / NRRL Y-11545) (Yeast).